The following is a 353-amino-acid chain: Methylthioribose-1-phosphate isomerase (353 aa).

Substrate-binding positions include 51–53 (RGA), arginine 94, and glutamine 199. Residue aspartate 240 is the Proton donor of the active site. 250–251 (NK) is a binding site for substrate.

The protein belongs to the EIF-2B alpha/beta/delta subunits family. MtnA subfamily. Homodimer.

The enzyme catalyses 5-(methylsulfanyl)-alpha-D-ribose 1-phosphate = 5-(methylsulfanyl)-D-ribulose 1-phosphate. It participates in amino-acid biosynthesis; L-methionine biosynthesis via salvage pathway; L-methionine from S-methyl-5-thio-alpha-D-ribose 1-phosphate: step 1/6. In terms of biological role, catalyzes the interconversion of methylthioribose-1-phosphate (MTR-1-P) into methylthioribulose-1-phosphate (MTRu-1-P). In Bacillus cereus (strain ATCC 14579 / DSM 31 / CCUG 7414 / JCM 2152 / NBRC 15305 / NCIMB 9373 / NCTC 2599 / NRRL B-3711), this protein is Methylthioribose-1-phosphate isomerase.